A 346-amino-acid chain; its full sequence is 3-isopropylmalate dehydrogenase (346 aa).

Gly76–Glu87 lines the NAD(+) pocket. Arg94, Arg104, Arg132, and Asp217 together coordinate substrate. 3 residues coordinate Mg(2+): Asp217, Asp241, and Asp245. NAD(+) is bound at residue Gly275 to Asn287.

This sequence belongs to the isocitrate and isopropylmalate dehydrogenases family. LeuB type 1 subfamily. As to quaternary structure, homodimer. The cofactor is Mg(2+). Requires Mn(2+) as cofactor.

It is found in the cytoplasm. The catalysed reaction is (2R,3S)-3-isopropylmalate + NAD(+) = 4-methyl-2-oxopentanoate + CO2 + NADH. Its pathway is amino-acid biosynthesis; L-leucine biosynthesis; L-leucine from 3-methyl-2-oxobutanoate: step 3/4. Catalyzes the oxidation of 3-carboxy-2-hydroxy-4-methylpentanoate (3-isopropylmalate) to 3-carboxy-4-methyl-2-oxopentanoate. The product decarboxylates to 4-methyl-2 oxopentanoate. The polypeptide is 3-isopropylmalate dehydrogenase (Staphylococcus saprophyticus subsp. saprophyticus (strain ATCC 15305 / DSM 20229 / NCIMB 8711 / NCTC 7292 / S-41)).